Reading from the N-terminus, the 382-residue chain is Lipid-A-disaccharide synthase (382 aa).

It belongs to the LpxB family.

It carries out the reaction 2-N,3-O-bis[(3R)-3-hydroxytetradecanoyl]-alpha-D-glucosaminyl 1-phosphate + UDP-2-N,3-O-bis[(3R)-3-hydroxytetradecanoyl]-alpha-D-glucosamine = lipid A disaccharide (E. coli) + UDP + H(+). The enzyme catalyses a lipid X + a UDP-2-N,3-O-bis[(3R)-3-hydroxyacyl]-alpha-D-glucosamine = a lipid A disaccharide + UDP + H(+). It participates in glycolipid biosynthesis; lipid IV(A) biosynthesis; lipid IV(A) from (3R)-3-hydroxytetradecanoyl-[acyl-carrier-protein] and UDP-N-acetyl-alpha-D-glucosamine: step 5/6. Functionally, condensation of UDP-2,3-diacylglucosamine and 2,3-diacylglucosamine-1-phosphate to form lipid A disaccharide, a precursor of lipid A, a phosphorylated glycolipid that anchors the lipopolysaccharide to the outer membrane of the cell. The sequence is that of Lipid-A-disaccharide synthase from Escherichia coli O7:K1 (strain IAI39 / ExPEC).